The chain runs to 606 residues: Atypical protein kinase C (606 aa).

One can recognise a PB1 domain in the interval 30 to 113; the sequence is SITVKTAYNG…SQLVIHVFPN (84 aa). The segment at 145 to 195 adopts a Phorbol-ester/DAG-type zinc-finger fold; it reads GHIFQAKRFNRRAFCAYCQDRIWGLGRQGFKCIQCKLLVHKKCHKLVQKHC. The region spanning 264–532 is the Protein kinase domain; the sequence is FELIRVIGRG…FMDIVSHPFF (269 aa). ATP-binding positions include 270-278 and K293; that span reads IGRGSYAKV. D388 (proton acceptor) is an active-site residue. Residues 533–604 enclose the AGC-kinase C-terminal domain; the sequence is KNMDWELLER…VNPLLMSLED (72 aa).

Belongs to the protein kinase superfamily. AGC Ser/Thr protein kinase family. PKC subfamily. As to quaternary structure, interacts with baz; the interaction is required for apical localization of aPKC in neuroblasts and epithelial cells. Interacts with Dap160; the interaction promotes aPKC apical localization and kinase activity. Interacts with and phosphorylates l(2)gl and yrt. Interacts with crb and ref(2)P. Forms a complex with baz, fz and Patj. As to expression, expressed in the testis. In spermatid cysts, localizes near the tips of spermatid flagellar axonemes (at protein level). Detectable in freshly laid eggs before onset of zygotic transcription so is deposited in the egg during oogenesis. At the cellular blastoderm stage, present in all cells except the pole cells. During gastrulation, strongly expressed in tissues undergoing morphogenetic movements such as invaginating mesoderm, proctodeum and cephalic furrow. Strongly expressed in neuroblasts.

Its subcellular location is the cytoplasm. The protein resides in the cell cortex. It localises to the apicolateral cell membrane. It catalyses the reaction L-seryl-[protein] + ATP = O-phospho-L-seryl-[protein] + ADP + H(+). It carries out the reaction L-threonyl-[protein] + ATP = O-phospho-L-threonyl-[protein] + ADP + H(+). Functionally, serine/threonine protein kinase which is required for apico-basal cell polarity in the germ line as well as in epithelial and neural precursor cells, for epithelial planar cell polarity and for cell proliferation. During oocyte development, required for the posterior translocation of oocyte specification factors and for the posterior establishment of the microtubule organizing center within the presumptive oocyte. Phosphorylates l(2)gl which restricts l(2)gl activity to the oocyte posterior and regulates posterior enrichment of par-1, leading to establishment of correct oocyte polarity. Essential for apical localization of l(2)gl and par-6 in neuroblasts and for exclusion of mira from the apical cortex. Phosphorylates baz which is required for targeting of baz to the postsynaptic region where it is involved in actin organization, and for apical exclusion of baz which is necessary for establishment of the apical/lateral border in epithelial cells. Phosphorylates yrt which prevents its premature apical localization and is necessary for correct epithelial cell polarization. Required for the establishment of mitotic spindle orientation during symmetric division of epithelial cells and for apical exclusion of raps/Pins. Involved in symmetric adherens junction positioning during embryogenesis. Required for polarization of the spermatid cyst which is necessary for sperm differentiation. Required for stimulation of the Toll signaling pathway which activates Dif and dl and plays a role in innate immunity. Plays a role in memory enhancement. The chain is Atypical protein kinase C from Drosophila melanogaster (Fruit fly).